The chain runs to 320 residues: Uroplakin-3b (320 aa).

The first 29 residues, 1–29 (MGLPWGQPHLGLQMLLLALNCLRPSLSLG), serve as a signal peptide directing secretion. At 30-240 (EWGSWMDASS…LHPLFSGRPP (211 aa)) the chain is on the lumenal side. N-linked (GlcNAc...) asparagine glycosylation occurs at Asn133. A helical transmembrane segment spans residues 241 to 266 (TLGLLGSLYHALLQPVVAGGGPGAAA). At 267–320 (DRLLHGQALHDPPHPTQRGRHTAGGLQAWPGPPPQPQPLAWPLCMGLGEMGRWE) the chain is on the cytoplasmic side. The disordered stretch occupies residues 273–303 (QALHDPPHPTQRGRHTAGGLQAWPGPPPQPQ).

It belongs to the uroplakin-3 family. Heterodimer with uroplakin-1B (UPK1B).

It localises to the cell membrane. Functionally, component of the asymmetric unit membrane (AUM); a highly specialized biomembrane elaborated by terminally differentiated urothelial cells. May play an important role in AUM-cytoskeleton interaction in terminally differentiated urothelial cells. It also contributes to the formation of urothelial glycocalyx which may play an important role in preventing bacterial adherence. The chain is Uroplakin-3b (UPK3B) from Homo sapiens (Human).